A 168-amino-acid chain; its full sequence is Cytochrome c-type biogenesis protein CcmE (168 aa).

At 1–7 the chain is on the cytoplasmic side; it reads MTRKQRR. The helical; Signal-anchor for type II membrane protein transmembrane segment at 8 to 28 threads the bilayer; sequence LMLIGVCGAVLAVALGLVLWA. At 29-168 the chain is on the periplasmic side; the sequence is MRGTIVFFRS…SGEKPALRQQ (140 aa). Heme-binding residues include H122 and Y126. Residues 134–168 form a disordered region; sequence ALKKQGHWQGEAKHPGGTAPAPQTASGEKPALRQQ.

Belongs to the CcmE/CycJ family.

It localises to the cell inner membrane. Functionally, heme chaperone required for the biogenesis of c-type cytochromes. Transiently binds heme delivered by CcmC and transfers the heme to apo-cytochromes in a process facilitated by CcmF and CcmH. This Methylobacterium nodulans (strain LMG 21967 / CNCM I-2342 / ORS 2060) protein is Cytochrome c-type biogenesis protein CcmE.